The chain runs to 274 residues: Bis(5'-nucleosyl)-tetraphosphatase, symmetrical (274 aa).

It belongs to the Ap4A hydrolase family.

The catalysed reaction is P(1),P(4)-bis(5'-adenosyl) tetraphosphate + H2O = 2 ADP + 2 H(+). Functionally, hydrolyzes diadenosine 5',5'''-P1,P4-tetraphosphate to yield ADP. In Shewanella oneidensis (strain ATCC 700550 / JCM 31522 / CIP 106686 / LMG 19005 / NCIMB 14063 / MR-1), this protein is Bis(5'-nucleosyl)-tetraphosphatase, symmetrical.